A 361-amino-acid polypeptide reads, in one-letter code: tRNA/tmRNA (uracil-C(5))-methyltransferase (361 aa).

Residues glutamine 185, tyrosine 213, asparagine 218, glutamate 234, and aspartate 294 each coordinate S-adenosyl-L-methionine. The Nucleophile role is filled by cysteine 319. Glutamate 353 serves as the catalytic Proton acceptor.

The protein belongs to the class I-like SAM-binding methyltransferase superfamily. RNA M5U methyltransferase family. TrmA subfamily.

The enzyme catalyses uridine(54) in tRNA + S-adenosyl-L-methionine = 5-methyluridine(54) in tRNA + S-adenosyl-L-homocysteine + H(+). The catalysed reaction is uridine(341) in tmRNA + S-adenosyl-L-methionine = 5-methyluridine(341) in tmRNA + S-adenosyl-L-homocysteine + H(+). Dual-specificity methyltransferase that catalyzes the formation of 5-methyluridine at position 54 (m5U54) in all tRNAs, and that of position 341 (m5U341) in tmRNA (transfer-mRNA). In Pseudomonas entomophila (strain L48), this protein is tRNA/tmRNA (uracil-C(5))-methyltransferase.